The chain runs to 276 residues: Ribonuclease 3 (276 aa).

An RNase III domain is found at 30–161 (LTAFIRSLFK…LTGAIYLDRG (132 aa)). Mg(2+) is bound at residue Glu-74. Asp-78 is an active-site residue. Residues Asp-147 and Glu-150 each coordinate Mg(2+). The active site involves Glu-150. Positions 188–257 (NHKSRLIEHT…AEEAMGALER (70 aa)) constitute a DRBM domain.

It belongs to the ribonuclease III family. As to quaternary structure, homodimer. Requires Mg(2+) as cofactor.

It is found in the cytoplasm. It catalyses the reaction Endonucleolytic cleavage to 5'-phosphomonoester.. Its function is as follows. Digests double-stranded RNA. Involved in the processing of primary rRNA transcript to yield the immediate precursors to the large and small rRNAs (23S and 16S). Processes some mRNAs, and tRNAs when they are encoded in the rRNA operon. Processes pre-crRNA and tracrRNA of type II CRISPR loci if present in the organism. The protein is Ribonuclease 3 of Chlorobium luteolum (strain DSM 273 / BCRC 81028 / 2530) (Pelodictyon luteolum).